The sequence spans 192 residues: Thioredoxin-like 3-2, chloroplastic (192 aa).

The N-terminal 55 residues, methionine 1–arginine 55, are a transit peptide targeting the chloroplast. Positions leucine 66–isoleucine 191 constitute a Thioredoxin domain. Catalysis depends on nucleophile residues cysteine 110 and cysteine 113. A disulfide bond links cysteine 110 and cysteine 113.

The protein belongs to the thioredoxin family.

It is found in the plastid. It localises to the chloroplast stroma. Functionally, probable thiol-disulfide oxidoreductase that may participate in various redox reactions. The protein is Thioredoxin-like 3-2, chloroplastic (WCRKC2) of Arabidopsis thaliana (Mouse-ear cress).